The primary structure comprises 502 residues: Probable cytosol aminopeptidase (502 aa).

Mn(2+) is bound by residues K275 and D280. K287 is a catalytic residue. Mn(2+) is bound by residues D298, D357, and E359. R361 is an active-site residue.

The protein belongs to the peptidase M17 family. Requires Mn(2+) as cofactor.

The protein resides in the cytoplasm. It catalyses the reaction Release of an N-terminal amino acid, Xaa-|-Yaa-, in which Xaa is preferably Leu, but may be other amino acids including Pro although not Arg or Lys, and Yaa may be Pro. Amino acid amides and methyl esters are also readily hydrolyzed, but rates on arylamides are exceedingly low.. The catalysed reaction is Release of an N-terminal amino acid, preferentially leucine, but not glutamic or aspartic acids.. Presumably involved in the processing and regular turnover of intracellular proteins. Catalyzes the removal of unsubstituted N-terminal amino acids from various peptides. This Ralstonia pickettii (strain 12J) protein is Probable cytosol aminopeptidase.